Here is a 179-residue protein sequence, read N- to C-terminus: Large ribosomal subunit protein uL5 (179 aa).

Belongs to the universal ribosomal protein uL5 family. Part of the 50S ribosomal subunit; part of the 5S rRNA/L5/L18/L25 subcomplex. Contacts the 5S rRNA and the P site tRNA. Forms a bridge to the 30S subunit in the 70S ribosome.

This is one of the proteins that bind and probably mediate the attachment of the 5S RNA into the large ribosomal subunit, where it forms part of the central protuberance. In the 70S ribosome it contacts protein S13 of the 30S subunit (bridge B1b), connecting the 2 subunits; this bridge is implicated in subunit movement. Contacts the P site tRNA; the 5S rRNA and some of its associated proteins might help stabilize positioning of ribosome-bound tRNAs. This is Large ribosomal subunit protein uL5 from Janthinobacterium sp. (strain Marseille) (Minibacterium massiliensis).